The sequence spans 209 residues: Putative 3-methyladenine DNA glycosylase (209 aa).

This sequence belongs to the DNA glycosylase MPG family.

The sequence is that of Putative 3-methyladenine DNA glycosylase from Deinococcus geothermalis (strain DSM 11300 / CIP 105573 / AG-3a).